The sequence spans 60 residues: Large ribosomal subunit protein bL32 (60 aa).

Basic residues predominate over residues 1-23 (MAKHPVPKKKTSKARRDARRSHH). A disordered region spans residues 1–28 (MAKHPVPKKKTSKARRDARRSHHALTPP).

It belongs to the bacterial ribosomal protein bL32 family. In terms of assembly, part of the 50S ribosomal subunit.

Its function is as follows. Found on the solvent side of the large subunit. The polypeptide is Large ribosomal subunit protein bL32 (rpmF) (Thermus thermophilus (strain ATCC BAA-163 / DSM 7039 / HB27)).